Here is a 243-residue protein sequence, read N- to C-terminus: Isoprenyl transferase 2 (243 aa).

The active site involves aspartate 23. Aspartate 23 lines the Mg(2+) pocket. Residues 24-27, tryptophan 28, arginine 36, histidine 40, and 68-70 contribute to the substrate site; these read GNGR and STE. Asparagine 71 acts as the Proton acceptor in catalysis. Residues tryptophan 72, arginine 74, arginine 191, and 197-199 contribute to the substrate site; that span reads RTS. Residue glutamate 210 participates in Mg(2+) binding.

It belongs to the UPP synthase family. In terms of assembly, homodimer. Mg(2+) serves as cofactor.

Functionally, catalyzes the condensation of isopentenyl diphosphate (IPP) with allylic pyrophosphates generating different type of terpenoids. The chain is Isoprenyl transferase 2 from Corynebacterium glutamicum (strain ATCC 13032 / DSM 20300 / JCM 1318 / BCRC 11384 / CCUG 27702 / LMG 3730 / NBRC 12168 / NCIMB 10025 / NRRL B-2784 / 534).